The primary structure comprises 199 residues: ATP-dependent Clp protease proteolytic subunit (199 aa).

Ser97 serves as the catalytic Nucleophile. His122 is a catalytic residue.

The protein belongs to the peptidase S14 family. As to quaternary structure, fourteen ClpP subunits assemble into 2 heptameric rings which stack back to back to give a disk-like structure with a central cavity, resembling the structure of eukaryotic proteasomes.

The protein localises to the cytoplasm. It catalyses the reaction Hydrolysis of proteins to small peptides in the presence of ATP and magnesium. alpha-casein is the usual test substrate. In the absence of ATP, only oligopeptides shorter than five residues are hydrolyzed (such as succinyl-Leu-Tyr-|-NHMec, and Leu-Tyr-Leu-|-Tyr-Trp, in which cleavage of the -Tyr-|-Leu- and -Tyr-|-Trp bonds also occurs).. Cleaves peptides in various proteins in a process that requires ATP hydrolysis. Has a chymotrypsin-like activity. Plays a major role in the degradation of misfolded proteins. This Geotalea daltonii (strain DSM 22248 / JCM 15807 / FRC-32) (Geobacter daltonii) protein is ATP-dependent Clp protease proteolytic subunit.